Here is a 729-residue protein sequence, read N- to C-terminus: Neurochondrin (729 aa).

Ser2 carries the post-translational modification N-acetylserine. Ser2 bears the Phosphoserine mark. An N-acetylalanine modification is found at Ser2. Residues Cys3 and Cys4 are each lipidated (S-palmitoyl cysteine). Arg75 carries the post-translational modification Asymmetric dimethylarginine. Ser448 is modified (phosphoserine).

The protein belongs to the neurochondrin family. In terms of assembly, interacts with MCHR1. Interacts with SEMA4C. Interacts with DIAPH1 (via FH3 domain). Interacts with GRM5. In terms of processing, palmitoylated. Palmitoylation by ZDHHC1, ZDHHC3 and ZDHHC11 regulates the association of NCDN with endosome membranes. May also be palmitoylated by ZDHHC7. As to expression, abundantly expressed in whole adult brain and in all individual brain regions examined, including spinal cord. Weakly expressed in ovary, testis, fetal brain and small intestine.

The protein localises to the cytoplasm. It is found in the cytosol. Its subcellular location is the endosome membrane. It localises to the cell projection. The protein resides in the dendrite. The protein localises to the postsynapse. Its function is as follows. Probably involved in signal transduction in the nervous system, via increasing cell surface localization of GRM5/mGluR5 and positively regulating its signaling. Required for the spatial learning process. Acts as a negative regulator of Ca(2+)-calmodulin-dependent protein kinase 2 (CaMK2) phosphorylation. May play a role in modulating melanin-concentrating hormone-mediated functions via its interaction with MCHR1 that interferes with G protein-coupled signal transduction. May be involved in bone metabolism. May also be involved in neurite outgrowth. The protein is Neurochondrin of Homo sapiens (Human).